We begin with the raw amino-acid sequence, 1317 residues long: Kinesin-like protein KIF16B (1317 aa).

Residues 3–358 (SVKVAVRVRP…LRYANRAKNI (356 aa)) enclose the Kinesin motor domain. Residue 102–109 (GQTGSGKS) participates in ATP binding. Positions 370–425 (VKLIRELRAEIARLKTLLAQGNQIALLDSPTALSMEEKLQQNEARVQELTKEWTNK) form a coiled coil. The residue at position 398 (serine 398) is a Phosphoserine. Positions 478-529 (TYVGRDDASTEQDIVLHGLDLESEHCIFENIGGTVTLIPLSGSQCSVNGVQI) constitute an FHA domain. Threonine 577 is modified (phosphothreonine). Serine 582 carries the phosphoserine modification. Coiled-coil stretches lie at residues 595 to 882 (GLEF…DESV) and 936 to 1087 (LSLD…VQKD). Positions 1036–1048 (LASLNSGSREQSG) are enriched in polar residues. Residues 1036 to 1057 (LASLNSGSREQSGLQASLEAEQ) form a disordered region. Serine 1052 carries the phosphoserine modification. The PX domain maps to 1182–1296 (DPIKISIPRY…KVGLTLSKHT (115 aa)).

This sequence belongs to the TRAFAC class myosin-kinesin ATPase superfamily. Kinesin family. As to quaternary structure, interacts with RAB14. Interacts with PTPN21. Primarily expressed in brain. Also present in kidney, liver, intestine, placenta, leukocytes, heart and skeletal muscle (at protein level).

It localises to the cytoplasm. The protein localises to the cytoskeleton. The protein resides in the early endosome membrane. Its subcellular location is the spindle. Its function is as follows. Plus end-directed microtubule-dependent motor protein involved in endosome transport and receptor recycling and degradation. Regulates the plus end motility of early endosomes and the balance between recycling and degradation of receptors such as EGF receptor (EGFR) and FGF receptor (FGFR). Regulates the Golgi to endosome transport of FGFR-containing vesicles during early development, a key process for developing basement membrane and epiblast and primitive endoderm lineages during early postimplantation development. This chain is Kinesin-like protein KIF16B (KIF16B), found in Homo sapiens (Human).